The primary structure comprises 207 residues: Protein LURP1 (207 aa).

Belongs to the LOR family. Limited to discrete pathogen infection sites in leaves.

Its function is as follows. Involved in basal defense against virulent oomycetes. Might be related to the phospholipid scramblase and tubby-like superfamily of membrane tethered transcription factors. This chain is Protein LURP1 (LURP1), found in Arabidopsis thaliana (Mouse-ear cress).